Reading from the N-terminus, the 416-residue chain is Enterobactin exporter EntS (416 aa).

Residues 1–21 (MNKQSWLLNLSLLKTHPAFRA) are Cytoplasmic-facing. A helical membrane pass occupies residues 22–42 (VFLARFISIVSLGLLGVAVPV). Residues 43–55 (QIQMMTHSTWQVG) lie on the Periplasmic side of the membrane. A helical transmembrane segment spans residues 56 to 76 (LSVTLTGGAMFVGLMVGGVLA). The Cytoplasmic segment spans residues 77–83 (DRYERKK). Residues 84-104 (VILLARGTCGIGFIGLCLNAL) traverse the membrane as a helical segment. At 105 to 109 (LPEPS) the chain is on the periplasmic side. The chain crosses the membrane as a helical span at residues 110–130 (LLAIYLLGLWDGFFASLGVTA). Topologically, residues 131–156 (LLAATPALVGRENLMQAGAITMLTVR) are cytoplasmic. A helical membrane pass occupies residues 157 to 177 (LGSVISPMIGGLLLATGGVAW). Position 178 (N178) is a topological domain, periplasmic. A helical membrane pass occupies residues 179–199 (YGLAAAGTFITLLPLLSLPAL). Residues 200–218 (PPPPQPREHPLKSLLAGFR) lie on the Cytoplasmic side of the membrane. A helical membrane pass occupies residues 219-239 (FLLASPLVGGIALLGGLLTMA). The Periplasmic segment spans residues 240-256 (SAVRVLYPALADNWQMS). Residues 257 to 277 (AAQIGFLYAAIPLGAAIGALT) traverse the membrane as a helical segment. The Cytoplasmic segment spans residues 278–287 (SGKLAHSARP). Residues 288 to 307 (GLLMLLSTLGSFLAIGLFGL) traverse the membrane as a helical segment. Residues 308–313 (MPMWIL) are Periplasmic-facing. Residues 314-336 (GVVCLALFGWLSAVSSLLQYTML) form a helical membrane-spanning segment. The Cytoplasmic portion of the chain corresponds to 337-356 (QTQTPEAMLGRINGLWTAQN). The helical transmembrane segment at 357–377 (VTGDAIGAALLGGLGAMMTPV) threads the bilayer. Residue A378 is a topological domain, periplasmic. Residues 379–399 (SASASGFGLLIIGVLLLLVLV) form a helical membrane-spanning segment. Residues 400-416 (ELRRFRQTPPQVTASDS) lie on the Cytoplasmic side of the membrane.

It belongs to the major facilitator superfamily. EntS (TC 2.A.1.38) family.

Its subcellular location is the cell inner membrane. In terms of biological role, component of an export pathway for enterobactin. The protein is Enterobactin exporter EntS of Escherichia coli (strain 55989 / EAEC).